A 322-amino-acid polypeptide reads, in one-letter code: Large ribosomal subunit protein uL10 (322 aa).

The disordered stretch occupies residues 294–322 (APAAAAKAEKEEEPAEESDDEMGFGLFDE). The segment covering 304–322 (EEEPAEESDDEMGFGLFDE) has biased composition (acidic residues).

It belongs to the universal ribosomal protein uL10 family. P0 forms a pentameric complex by interaction with dimers of P1 and P2. Phosphorylated.

Ribosomal protein P0 is the functional equivalent of E.coli protein L10. In Lupinus luteus (European yellow lupine), this protein is Large ribosomal subunit protein uL10.